The sequence spans 364 residues: Succinyl-diaminopimelate desuccinylase (364 aa).

A Zn(2+)-binding site is contributed by His-64. Asp-66 is a catalytic residue. Asp-95 serves as a coordination point for Zn(2+). Glu-125 (proton acceptor) is an active-site residue. Zn(2+)-binding residues include Glu-126, Glu-154, and His-339.

It belongs to the peptidase M20A family. DapE subfamily. In terms of assembly, homodimer. Zn(2+) serves as cofactor. The cofactor is Co(2+).

It carries out the reaction N-succinyl-(2S,6S)-2,6-diaminopimelate + H2O = (2S,6S)-2,6-diaminopimelate + succinate. It functions in the pathway amino-acid biosynthesis; L-lysine biosynthesis via DAP pathway; LL-2,6-diaminopimelate from (S)-tetrahydrodipicolinate (succinylase route): step 3/3. Its function is as follows. Catalyzes the hydrolysis of N-succinyl-L,L-diaminopimelic acid (SDAP), forming succinate and LL-2,6-diaminopimelate (DAP), an intermediate involved in the bacterial biosynthesis of lysine and meso-diaminopimelic acid, an essential component of bacterial cell walls. This is Succinyl-diaminopimelate desuccinylase from Nitratiruptor sp. (strain SB155-2).